The chain runs to 549 residues: Carboxylesterase 1C (549 aa).

The first 18 residues, 1-18, serve as a signal peptide directing secretion; it reads MWLCALVWASLAVCPIWG. An N-linked (GlcNAc...) asparagine glycan is attached at N79. A disulfide bridge links C87 with C116. The active-site Acyl-ester intermediate is the S221. C273 and C284 are joined by a disulfide. N-linked (GlcNAc...) asparagine glycans are attached at residues N274, N275, and N302. E340 (charge relay system) is an active-site residue. An N-linked (GlcNAc...) asparagine glycan is attached at N375. Catalysis depends on H453, which acts as the Charge relay system. A Phosphoserine modification is found at S471. The N-linked (GlcNAc...) asparagine glycan is linked to N476. Residues 546–549 carry the Prevents secretion from ER motif; it reads TEHT.

It belongs to the type-B carboxylesterase/lipase family.

The protein localises to the endoplasmic reticulum lumen. The enzyme catalyses a carboxylic ester + H2O = an alcohol + a carboxylate + H(+). Functionally, involved in the detoxification of xenobiotics and in the activation of ester and amide prodrugs. Involved in the extracellular metabolism of lung surfactant. This Rattus norvegicus (Rat) protein is Carboxylesterase 1C (Ces1c).